We begin with the raw amino-acid sequence, 205 residues long: 7-methyl-GTP pyrophosphatase (205 aa).

The Proton acceptor role is filled by Asp79.

It belongs to the Maf family. YceF subfamily. Requires a divalent metal cation as cofactor.

The protein localises to the cytoplasm. It carries out the reaction N(7)-methyl-GTP + H2O = N(7)-methyl-GMP + diphosphate + H(+). In terms of biological role, nucleoside triphosphate pyrophosphatase that hydrolyzes 7-methyl-GTP (m(7)GTP). May have a dual role in cell division arrest and in preventing the incorporation of modified nucleotides into cellular nucleic acids. In Paraburkholderia xenovorans (strain LB400), this protein is 7-methyl-GTP pyrophosphatase.